The chain runs to 1330 residues: G2/mitotic-specific cyclin-B3 (1330 aa).

Positions 1-50 are disordered; sequence MPLPLPSRSSKPETKKSRSSKIVPSGNNGQSEKRGENYQEKISSSSPRRL. Over residues 20 to 30 the composition is skewed to polar residues; it reads SKIVPSGNNGQ. Positions 54 to 62 match the D-box motif; it reads RSAFEDLTN. Residues 1002-1059 are disordered; the sequence is VETSSRVPSTPPESRAGMSSVGKLSTTSKSSVCESSSNKPSSSWGESSQKEMTPLEDI. Low complexity predominate over residues 1026-1048; it reads STTSKSSVCESSSNKPSSSWGES.

It belongs to the cyclin family. Cyclin AB subfamily. Interacts with CDK2 kinase. Ubiquitinated. Ubiquitination leads to its degradation during anaphase entry, after degradation of CCNB1.

Its subcellular location is the nucleus. Cyclins are positive regulatory subunits of the cyclin-dependent kinases (CDKs), and thereby play an essential role in the control of the cell cycle, notably via their destruction during cell division. Its tissue specificity suggest that it may be required during early meiotic prophase I. The protein is G2/mitotic-specific cyclin-B3 (CCNB3) of Canis lupus familiaris (Dog).